The chain runs to 136 residues: MKWQQRVRVATGLSCWQIMLHLLVVALLVVGWMSKTLVHVGVGLCALYCVTVVMMLVFQRHPEQRWREVADVLEELTTTWYFGAALIVLWLLSRVLENNFLLAIAGLAILAGPAVVSLLAKDKKLHHLTSKHRVRR.

At 1 to 12 (MKWQQRVRVATG) the chain is on the cytoplasmic side. Residues 13–33 (LSCWQIMLHLLVVALLVVGWM) form a helical membrane-spanning segment. The Periplasmic segment spans residues 34 to 37 (SKTL). The chain crosses the membrane as a helical span at residues 38–58 (VHVGVGLCALYCVTVVMMLVF). Residues 59–71 (QRHPEQRWREVAD) are Cytoplasmic-facing. The helical transmembrane segment at 72 to 92 (VLEELTTTWYFGAALIVLWLL) threads the bilayer. The Periplasmic segment spans residues 93–99 (SRVLENN). Residues 100-120 (FLLAIAGLAILAGPAVVSLLA) traverse the membrane as a helical segment. At 121-136 (KDKKLHHLTSKHRVRR) the chain is on the cytoplasmic side.

It localises to the cell inner membrane. The sequence is that of Inner membrane protein YbhQ (ybhQ) from Escherichia coli O157:H7.